The chain runs to 232 residues: Cytidylate kinase (232 aa).

Residue 19 to 27 (GPAGVGKTT) participates in ATP binding.

This sequence belongs to the cytidylate kinase family. Type 1 subfamily.

It localises to the cytoplasm. It carries out the reaction CMP + ATP = CDP + ADP. It catalyses the reaction dCMP + ATP = dCDP + ADP. This Nitratidesulfovibrio vulgaris (strain DP4) (Desulfovibrio vulgaris) protein is Cytidylate kinase.